Consider the following 56-residue polypeptide: Large ribosomal subunit protein bL32 (56 aa).

The segment at 1 to 21 (MGVPQRRQSHARKNKRRSEWR) is disordered. Residues 7–19 (RQSHARKNKRRSE) show a composition bias toward basic residues.

It belongs to the bacterial ribosomal protein bL32 family.

In Syntrophomonas wolfei subsp. wolfei (strain DSM 2245B / Goettingen), this protein is Large ribosomal subunit protein bL32.